Consider the following 400-residue polypeptide: Phosphoglycerate kinase (400 aa).

Residues 22 to 24 (DLN), Arg-37, 60 to 63 (HLGR), Arg-119, and Arg-159 contribute to the substrate site. ATP-binding positions include Lys-209, Gly-297, Glu-328, and 354-357 (GGDS).

This sequence belongs to the phosphoglycerate kinase family. As to quaternary structure, monomer.

It localises to the cytoplasm. The enzyme catalyses (2R)-3-phosphoglycerate + ATP = (2R)-3-phospho-glyceroyl phosphate + ADP. The protein operates within carbohydrate degradation; glycolysis; pyruvate from D-glyceraldehyde 3-phosphate: step 2/5. The polypeptide is Phosphoglycerate kinase (Saccharopolyspora erythraea (strain ATCC 11635 / DSM 40517 / JCM 4748 / NBRC 13426 / NCIMB 8594 / NRRL 2338)).